We begin with the raw amino-acid sequence, 418 residues long: 3-isopropylmalate dehydratase large subunit (418 aa).

[4Fe-4S] cluster is bound by residues Cys299, Cys359, and Cys362.

This sequence belongs to the aconitase/IPM isomerase family. LeuC type 2 subfamily. Heterodimer of LeuC and LeuD. It depends on [4Fe-4S] cluster as a cofactor.

The enzyme catalyses (2R,3S)-3-isopropylmalate = (2S)-2-isopropylmalate. The protein operates within amino-acid biosynthesis; L-leucine biosynthesis; L-leucine from 3-methyl-2-oxobutanoate: step 2/4. Its function is as follows. Catalyzes the isomerization between 2-isopropylmalate and 3-isopropylmalate, via the formation of 2-isopropylmaleate. The polypeptide is 3-isopropylmalate dehydratase large subunit (Oleidesulfovibrio alaskensis (strain ATCC BAA-1058 / DSM 17464 / G20) (Desulfovibrio alaskensis)).